The chain runs to 149 residues: Nucleoside diphosphate kinase (149 aa).

ATP-binding residues include K9, F57, R85, T91, R102, and N112. The Pros-phosphohistidine intermediate role is filled by H115.

This sequence belongs to the NDK family. The cofactor is Mg(2+).

The protein localises to the cytoplasm. It catalyses the reaction a 2'-deoxyribonucleoside 5'-diphosphate + ATP = a 2'-deoxyribonucleoside 5'-triphosphate + ADP. It carries out the reaction a ribonucleoside 5'-diphosphate + ATP = a ribonucleoside 5'-triphosphate + ADP. Major role in the synthesis of nucleoside triphosphates other than ATP. The ATP gamma phosphate is transferred to the NDP beta phosphate via a ping-pong mechanism, using a phosphorylated active-site intermediate. The sequence is that of Nucleoside diphosphate kinase from Methanospirillum hungatei JF-1 (strain ATCC 27890 / DSM 864 / NBRC 100397 / JF-1).